Reading from the N-terminus, the 253-residue chain is Acidic endochitinase pcht28 (253 aa).

Positions 1–24 are cleaved as a signal peptide; that stretch reads MKFNIVSPVALSCLFFLFLTGTLA. Catalysis depends on E92, which acts as the Proton donor. C212 and C244 are joined by a disulfide.

This sequence belongs to the glycosyl hydrolase 19 family. Chitinase class II subfamily.

The protein resides in the secreted. The protein localises to the extracellular space. The catalysed reaction is Random endo-hydrolysis of N-acetyl-beta-D-glucosaminide (1-&gt;4)-beta-linkages in chitin and chitodextrins.. Functionally, defense against chitin-containing fungal pathogens. This chain is Acidic endochitinase pcht28, found in Solanum chilense (Tomato).